A 236-amino-acid polypeptide reads, in one-letter code: MSAPDLKRAAAERAIPLVEDGMRLGIGTGSTAAAFIALLGERVRAGLTVTGVPTSEATRIACEREGIPLATLEELPELDLTIDGADEVDGNLRLIKGGGAALLREKIVAAASRRMVVIADASKRVETLGAFPLPVEVNLFGIGATTRAVEAAVAAAGCIGEIVRRLDKAGQPVLTDGGHALLDLRLGRIPDPEALSARLWAVPGVVEHGLFLGIADAAILAAAEGDQAVVSVLGRL.

Residues T28 to T31, D83 to D86, and K96 to G99 contribute to the substrate site. The active-site Proton acceptor is the E105. Residue K123 participates in substrate binding.

It belongs to the ribose 5-phosphate isomerase family. In terms of assembly, homodimer.

The enzyme catalyses aldehydo-D-ribose 5-phosphate = D-ribulose 5-phosphate. The protein operates within carbohydrate degradation; pentose phosphate pathway; D-ribose 5-phosphate from D-ribulose 5-phosphate (non-oxidative stage): step 1/1. Its function is as follows. Catalyzes the reversible conversion of ribose-5-phosphate to ribulose 5-phosphate. This chain is Ribose-5-phosphate isomerase A, found in Methylorubrum populi (strain ATCC BAA-705 / NCIMB 13946 / BJ001) (Methylobacterium populi).